The sequence spans 161 residues: Nucleotide-binding protein Pnec_0318 (161 aa).

It belongs to the YajQ family.

Functionally, nucleotide-binding protein. This is Nucleotide-binding protein Pnec_0318 from Polynucleobacter necessarius subsp. necessarius (strain STIR1).